Consider the following 211-residue polypeptide: Adenylate kinase (211 aa).

10 to 15 (GSGKGT) provides a ligand contact to ATP. The NMP stretch occupies residues 30-59 (STGDLFRENILNSTALGQEIKKIVERGELV). AMP is bound by residues Thr-31, Arg-36, 57 to 59 (ELV), 85 to 88 (GFPR), and Gln-92. The tract at residues 121–158 (GRRICKSCNNIFNIYTLTTKKNGICDVCGGDLYQREDD) is LID. Arg-122 lines the ATP pocket. Residues Cys-125 and Cys-128 each coordinate Zn(2+). 131-132 (IF) provides a ligand contact to ATP. Zn(2+) is bound by residues Cys-145 and Cys-148. AMP is bound by residues Arg-155 and Arg-166. An ATP-binding site is contributed by Val-194.

The protein belongs to the adenylate kinase family. Monomer.

The protein resides in the cytoplasm. The catalysed reaction is AMP + ATP = 2 ADP. It functions in the pathway purine metabolism; AMP biosynthesis via salvage pathway; AMP from ADP: step 1/1. Its function is as follows. Catalyzes the reversible transfer of the terminal phosphate group between ATP and AMP. Plays an important role in cellular energy homeostasis and in adenine nucleotide metabolism. The sequence is that of Adenylate kinase from Borreliella burgdorferi (strain ATCC 35210 / DSM 4680 / CIP 102532 / B31) (Borrelia burgdorferi).